The chain runs to 494 residues: Glutamyl-tRNA(Gln) amidotransferase subunit A (494 aa).

Catalysis depends on charge relay system residues Lys-78 and Ser-158. Catalysis depends on Ser-182, which acts as the Acyl-ester intermediate.

This sequence belongs to the amidase family. GatA subfamily. In terms of assembly, heterotrimer of A, B and C subunits.

It carries out the reaction L-glutamyl-tRNA(Gln) + L-glutamine + ATP + H2O = L-glutaminyl-tRNA(Gln) + L-glutamate + ADP + phosphate + H(+). Functionally, allows the formation of correctly charged Gln-tRNA(Gln) through the transamidation of misacylated Glu-tRNA(Gln) in organisms which lack glutaminyl-tRNA synthetase. The reaction takes place in the presence of glutamine and ATP through an activated gamma-phospho-Glu-tRNA(Gln). This chain is Glutamyl-tRNA(Gln) amidotransferase subunit A, found in Jannaschia sp. (strain CCS1).